The sequence spans 74 residues: MFPEYRDLISRLKNENPRFMSLFDKHNKLDHEIARKEGSDGRGYNAEVVRMKKQKLQLKDEMLKILQQESVKEV.

This is an uncharacterized protein from Escherichia coli (strain K12).